A 274-amino-acid chain; its full sequence is Bis(5'-nucleosyl)-tetraphosphatase, symmetrical (274 aa).

This sequence belongs to the Ap4A hydrolase family.

The catalysed reaction is P(1),P(4)-bis(5'-adenosyl) tetraphosphate + H2O = 2 ADP + 2 H(+). Functionally, hydrolyzes diadenosine 5',5'''-P1,P4-tetraphosphate to yield ADP. The protein is Bis(5'-nucleosyl)-tetraphosphatase, symmetrical of Erwinia tasmaniensis (strain DSM 17950 / CFBP 7177 / CIP 109463 / NCPPB 4357 / Et1/99).